The chain runs to 250 residues: MKNSYQQLTTNLEYLKLKQMAQHLGDVVDFSINNELSFVETLVKLTNYEIDVREQNMIHSMVKMGAFPHRKEVDEFDFEFQPSINKQQILDFISLRFLEQQENIVFLGPSGVGKTHLATSIGIAAAKKRTSTYFIKCHDLLQNLKRAKIENRLESRLKHYTKYKLLIIDEIGYLPIDPEDAKLFFQLIDMRYEKRSTILTTNINFKSWDEVFQDPKLANAILDRVLHHATVVSIVGQSYRIKDHFSKEND.

108–115 (GPSGVGKT) is a binding site for ATP.

It belongs to the IS21/IS1162 putative ATP-binding protein family.

This Bacillus thuringiensis subsp. berliner protein is Insertion sequence IS232 putative ATP-binding protein.